The chain runs to 247 residues: Probable transcriptional regulatory protein MS0710 (247 aa).

The protein belongs to the TACO1 family.

It is found in the cytoplasm. This is Probable transcriptional regulatory protein MS0710 from Mannheimia succiniciproducens (strain KCTC 0769BP / MBEL55E).